The following is a 214-amino-acid chain: Killer cell lectin-like receptor subfamily B member 1 (214 aa).

Residues 1 to 42 (MDAPVLYAELHLANTQGLRCTSPPSPRQDACWGSGWHRVALK) are Cytoplasmic-facing. The helical; Signal-anchor for type II membrane protein transmembrane segment at 43 to 63 (LGCVGLILLLMGLSVLVGFLV) threads the bilayer. At 64-214 (QKPPIEKCSV…WICQKTLKRV (151 aa)) the chain is on the extracellular side. Residues 98-208 (HWNKCLFISQ…CSSDNHWICQ (111 aa)) enclose the C-type lectin domain. Intrachain disulfides connect C119/C207 and C186/C199.

Its subcellular location is the membrane. The chain is Killer cell lectin-like receptor subfamily B member 1 (Klrb1) from Rattus norvegicus (Rat).